The sequence spans 212 residues: FMN-dependent NADH:quinone oxidoreductase (212 aa).

FMN contacts are provided by residues Ser10 and 17–19 (SFS).

It belongs to the azoreductase type 1 family. As to quaternary structure, homodimer. FMN serves as cofactor.

The enzyme catalyses 2 a quinone + NADH + H(+) = 2 a 1,4-benzosemiquinone + NAD(+). It catalyses the reaction N,N-dimethyl-1,4-phenylenediamine + anthranilate + 2 NAD(+) = 2-(4-dimethylaminophenyl)diazenylbenzoate + 2 NADH + 2 H(+). Functionally, quinone reductase that provides resistance to thiol-specific stress caused by electrophilic quinones. In terms of biological role, also exhibits azoreductase activity. Catalyzes the reductive cleavage of the azo bond in aromatic azo compounds to the corresponding amines. This Malacoplasma penetrans (strain HF-2) (Mycoplasma penetrans) protein is FMN-dependent NADH:quinone oxidoreductase.